The primary structure comprises 647 residues: Meiotically up-regulated protein C8C9.04 (647 aa).

2 disordered regions span residues 1–241 (MTTN…ELKP) and 387–647 (RAQQ…KLFH). Polar residues predominate over residues 29-46 (KSTNAVEQNNNSSQASVT). Basic residues predominate over residues 49–67 (NKKKAAKRAKKKAAKKKKQ). Polar residues predominate over residues 92–103 (TILQEPGFTQTI). The segment covering 134-145 (PSASTSTAVPTT) has biased composition (low complexity). The segment covering 146–155 (EARNTSITEP) has biased composition (polar residues). The span at 156-177 (ANSPSSSSSSASTKSTATTQSA) shows a compositional bias: low complexity. Phosphoserine is present on residues S162 and S165. A Phosphothreonine modification is found at T168. Over residues 193 to 215 (QLGNSPASITSKPATTSAAQPSS) the composition is skewed to polar residues. Phosphoserine is present on residues S197 and S200. The segment covering 232–241 (AEKEIPELKP) has biased composition (basic and acidic residues). Composition is skewed to polar residues over residues 390-406 (QPEQYESSVVQEATETV), 413-432 (VSSTVKNEVNVPSTIPTESE), and 488-508 (PSSTGQEPTTPSTPAKSAQSS). At S396 the chain carries Phosphoserine. Phosphoserine is present on residues S489 and S490. Phosphothreonine is present on T491. Residues S515, S519, and S523 each carry the phosphoserine modification. Positions 518 to 530 (ASAPSSPGTTSAA) are enriched in low complexity. Residues 561–589 (GSATTIPSPGSATTKPTPGSATTKPTPVS) are compositionally biased toward polar residues. The span at 596 to 613 (AGTTKPAPAAGATATAEN) shows a compositional bias: low complexity. Positions 633-647 (SWFKRMKKSFGKLFH) are enriched in basic residues.

Its function is as follows. Has a role in meiosis and sporulation. The chain is Meiotically up-regulated protein C8C9.04 from Schizosaccharomyces pombe (strain 972 / ATCC 24843) (Fission yeast).